The following is a 386-amino-acid chain: MKNLTIVADSNIASLDEFFNPVALGQNTEQQVQVIRVAGRDINAQLMADVQPDVLLIRSVTSINESLLSDNNSVKFVGSATIGTDHVDQEYLAERNITFANAAGCSKHSVAQYVVTAILTLRPQYWQQSTKPLTVGIIGLGNIGSTLAQYANDLGWKILGYDPLLATSDINNASLEQVLSQSDIVSLHVPLTDKKDTDAQDAVSNSISNNVSDYPTRHLINAETLTLMSPHTMLINSARGPVIDAAALEADIDATERQVVLDVFEHEPQISESLLSKLAIATPHIAGYTLEGKLRGTQIIYDALCEKLAVLPVLSMHQLLPLNTYLWFELKEHPDRLQKFYDIKKDDAALRNKITNGKVKGSDFDQLRRDYHLRREWQAQTISVTI.

Ser-59 and Thr-81 together coordinate substrate. Asp-162 provides a ligand contact to NAD(+). Residue Arg-239 is part of the active site. NAD(+) is bound at residue Asp-262. Glu-267 is a catalytic residue. Catalysis depends on His-284, which acts as the Proton donor. Residue Gly-287 coordinates NAD(+). Residue Tyr-288 coordinates substrate.

This sequence belongs to the D-isomer specific 2-hydroxyacid dehydrogenase family. PdxB subfamily. Homodimer.

It is found in the cytoplasm. It catalyses the reaction 4-phospho-D-erythronate + NAD(+) = (R)-3-hydroxy-2-oxo-4-phosphooxybutanoate + NADH + H(+). The protein operates within cofactor biosynthesis; pyridoxine 5'-phosphate biosynthesis; pyridoxine 5'-phosphate from D-erythrose 4-phosphate: step 2/5. Functionally, catalyzes the oxidation of erythronate-4-phosphate to 3-hydroxy-2-oxo-4-phosphonooxybutanoate. The sequence is that of Erythronate-4-phosphate dehydrogenase from Psychrobacter cryohalolentis (strain ATCC BAA-1226 / DSM 17306 / VKM B-2378 / K5).